A 411-amino-acid polypeptide reads, in one-letter code: MSAVSESVLSLSRYYLPVYRPCQVVLVRGQGSRVWDEQGRDYLDLAAGIAVCCLGHCDPDLVAALVEQAGRLWHTSNVFYSEPSLRLAQELVDVSRFAERVFLCSSGTEANEAAIKLVRKWAAAQGRLPEHRTIVTFRGSFHGRTLGAVTATAQPKYQEGYEPLPGGFRYVDFNHIEALEAAMVGGDVAAVMLEPIQGEGGVMPIAPGYLAQVRALCDRYGALLVLDEIQCGMGRTGTLFAYWQEEVVPDIVTLAKGLGGGFPIGAMLAGPKVAEVMQFGAHGTTFGGNPMAAAVARVALRKLASVEIAANVQRQSVALRAGLEEISEAFGGVFTQVRGRGLMLGAVLAPLYAGQASAILEVAAEHGVLLLQAGPDVLRFVPALNVSDEELADGLVRLRAALGDYVSRCRG.

Pyridoxal 5'-phosphate is bound by residues 107–108 and F141; that span reads GT. R144 is a binding site for N(2)-acetyl-L-ornithine. 227–230 is a binding site for pyridoxal 5'-phosphate; it reads DEIQ. Position 256 is an N6-(pyridoxal phosphate)lysine (K256). T284 contributes to the N(2)-acetyl-L-ornithine binding site. Pyridoxal 5'-phosphate is bound at residue T285.

Belongs to the class-III pyridoxal-phosphate-dependent aminotransferase family. ArgD subfamily. In terms of assembly, homodimer. It depends on pyridoxal 5'-phosphate as a cofactor.

The protein resides in the cytoplasm. The enzyme catalyses N(2)-acetyl-L-ornithine + 2-oxoglutarate = N-acetyl-L-glutamate 5-semialdehyde + L-glutamate. It functions in the pathway amino-acid biosynthesis; L-arginine biosynthesis; N(2)-acetyl-L-ornithine from L-glutamate: step 4/4. This chain is Acetylornithine aminotransferase, found in Xylella fastidiosa (strain Temecula1 / ATCC 700964).